The sequence spans 200 residues: Eukaryotic translation initiation factor isoform 4E (200 aa).

Positions Met-1–Ala-22 are disordered. MRNA is bound by residues Gln-44–Gly-49, Lys-76, and Trp-94–Glu-95. Cys-99 and Cys-138 are joined by a disulfide. MRNA-binding positions include Arg-145–Lys-150 and Lys-189–Arg-192.

It belongs to the eukaryotic initiation factor 4E family. In terms of assembly, EIF4F is a multi-subunit complex, the composition of which varies with external and internal environmental conditions. It is composed of at least EIF4A, EIF4E and EIF4G. EIF4E is also known to interact with other partners. In higher plants two isoforms of EIF4F have been identified, named isoform EIF4F and isoform EIF(iso)4F. Isoform EIF4F has subunits p220 and p26, whereas isoform EIF(iso)4F has subunits p82 and p28. (Microbial infection) Interacts with viral genome-linked protein (VPg); this interaction is possible in susceptible hosts but impaired in resistant plants. Post-translationally, according to the redox status, the Cys-99-Cys-138 disulfide bridge may have a role in regulating protein function by affecting its ability to bind capped mRNA. Expressed ubiquitously in seedlings, roots, leaves, sepals, petals, anthers and dehisced pollen, with highest levels in pollen, maturing anthers and roots. Strongly expressed in susceptible plants but not in resistant ones.

The protein localises to the cytoplasm. The protein resides in the nucleus. In terms of biological role, component of the protein complex eIF4F, which is involved in the recognition of the mRNA cap, ATP-dependent unwinding of 5'-terminal secondary structure and recruitment of mRNA to the ribosome. Recognizes and binds the 7-methylguanosine-containing mRNA cap during an early step in the initiation of protein synthesis and facilitates ribosome binding by inducing the unwinding of the mRNAs secondary structures. Key component of recessive resistance to potyviruses. Its function is as follows. (Microbial infection) Susceptibility host factor required for viral infection (e.g. potato virus Y (PVY) and pepper mottle virus (PepMoV)) by recruiting viral RNAs to the host ribosomal complex via an interaction with viral genome-linked protein (VPg). This Nicotiana tabacum (Common tobacco) protein is Eukaryotic translation initiation factor isoform 4E.